The primary structure comprises 248 residues: Ubiquinone biosynthesis O-methyltransferase (248 aa).

S-adenosyl-L-methionine contacts are provided by R40, G71, D92, and M135.

This sequence belongs to the methyltransferase superfamily. UbiG/COQ3 family.

The catalysed reaction is a 3-demethylubiquinol + S-adenosyl-L-methionine = a ubiquinol + S-adenosyl-L-homocysteine + H(+). The enzyme catalyses a 3-(all-trans-polyprenyl)benzene-1,2-diol + S-adenosyl-L-methionine = a 2-methoxy-6-(all-trans-polyprenyl)phenol + S-adenosyl-L-homocysteine + H(+). It participates in cofactor biosynthesis; ubiquinone biosynthesis. In terms of biological role, O-methyltransferase that catalyzes the 2 O-methylation steps in the ubiquinone biosynthetic pathway. In Roseobacter denitrificans (strain ATCC 33942 / OCh 114) (Erythrobacter sp. (strain OCh 114)), this protein is Ubiquinone biosynthesis O-methyltransferase.